Reading from the N-terminus, the 1976-residue chain is Myosin-10 (1976 aa).

R18 carries the post-translational modification Omega-N-methylarginine. The region spanning 31–81 is the Myosin N-terminal SH3-like domain; sequence TAKKLVWIPSERHGFEAASIKEERGDEVLVELAENGKKAMVNKDDIQKMNP. The Myosin motor domain maps to 85-783; it reads SKVEDMAELT…VLAHLEEERD (699 aa). 178 to 185 contacts ATP; the sequence is GESGAGKT. An N6-acetyllysine modification is found at K442. The actin-binding stretch occupies residues 661–683; it reads LTKLMATLRNTNPNFVRCIIPNH. Residues 786–815 form the IQ domain; the sequence is ITDIIIFFQAVCRGYLARKAFAKKQQQLSA. Positions 845-1976 form a coiled coil; it reads LQVTRQEEEL…INETQPPQSE (1132 aa). The disordered stretch occupies residues 1126–1149; the sequence is DFESEKASRNKAEKQKRDLSEELE. The span at 1129–1149 shows a compositional bias: basic and acidic residues; that stretch reads SEKASRNKAEKQKRDLSEELE. S1145 is subject to Phosphoserine. Residues K1241, K1301, and K1645 each carry the N6-acetyllysine modification. Disordered regions lie at residues 1697–1718 and 1874–1976; these read ASSE…DEIA and KANA…PQSE. Residues 1698 to 1708 show a composition bias toward basic and acidic residues; the sequence is SSERARRHAEQ. R1930 is modified (omega-N-methylarginine). 4 positions are modified to phosphoserine: S1935, S1937, S1938, and S1939. R1940 is modified (omega-N-methylarginine). Phosphoserine is present on residues S1952 and S1956. At T1960 the chain carries Phosphothreonine. A compositionally biased stretch (polar residues) spans 1967–1976; the sequence is INETQPPQSE. Phosphoserine is present on S1975.

It belongs to the TRAFAC class myosin-kinesin ATPase superfamily. Myosin family. As to quaternary structure, myosin is a hexameric protein that consists of 2 heavy chain subunits (MHC), 2 alkali light chain subunits (MLC) and 2 regulatory light chain subunits (MLC-2). Interacts with PLEKHG6. Interacts with ECPAS. Interacts with KIF26B. Interacts with LARP6. Interacts with MCC. Interacts with CFAP95. In terms of processing, phosphorylated by ABL2.

The protein resides in the cell projection. It is found in the lamellipodium. Its function is as follows. Cellular myosin that appears to play a role in cytokinesis, cell shape, and specialized functions such as secretion and capping. Involved with LARP6 in the stabilization of type I collagen mRNAs for CO1A1 and CO1A2. During cell spreading, plays an important role in cytoskeleton reorganization, focal contacts formation (in the central part but not the margins of spreading cells), and lamellipodial extension; this function is mechanically antagonized by MYH9. The protein is Myosin-10 (MYH10) of Bos taurus (Bovine).